A 324-amino-acid chain; its full sequence is Glyoxylate/hydroxypyruvate reductase B (324 aa).

Catalysis depends on residues Arg-237 and Glu-266. His-285 (proton donor) is an active-site residue.

It belongs to the D-isomer specific 2-hydroxyacid dehydrogenase family. GhrB subfamily. As to quaternary structure, homodimer.

The protein localises to the cytoplasm. The enzyme catalyses glycolate + NADP(+) = glyoxylate + NADPH + H(+). It catalyses the reaction (R)-glycerate + NAD(+) = 3-hydroxypyruvate + NADH + H(+). It carries out the reaction (R)-glycerate + NADP(+) = 3-hydroxypyruvate + NADPH + H(+). Catalyzes the NADPH-dependent reduction of glyoxylate and hydroxypyruvate into glycolate and glycerate, respectively. The polypeptide is Glyoxylate/hydroxypyruvate reductase B (Shigella boydii serotype 4 (strain Sb227)).